Reading from the N-terminus, the 215-residue chain is 3-isopropylmalate dehydratase small subunit (215 aa).

Belongs to the LeuD family. LeuD type 1 subfamily. Heterodimer of LeuC and LeuD.

It catalyses the reaction (2R,3S)-3-isopropylmalate = (2S)-2-isopropylmalate. It participates in amino-acid biosynthesis; L-leucine biosynthesis; L-leucine from 3-methyl-2-oxobutanoate: step 2/4. Its function is as follows. Catalyzes the isomerization between 2-isopropylmalate and 3-isopropylmalate, via the formation of 2-isopropylmaleate. This Leptothrix cholodnii (strain ATCC 51168 / LMG 8142 / SP-6) (Leptothrix discophora (strain SP-6)) protein is 3-isopropylmalate dehydratase small subunit.